Reading from the N-terminus, the 378-residue chain is Glutamate 5-kinase (378 aa).

Residue Lys-19 participates in ATP binding. Substrate-binding residues include Ser-59, Asp-146, and Asn-158. 178-179 (TD) lines the ATP pocket. A PUA domain is found at 285–363 (RGSVTVDPGA…SEFEKLLGYT (79 aa)).

Belongs to the glutamate 5-kinase family.

The protein localises to the cytoplasm. It carries out the reaction L-glutamate + ATP = L-glutamyl 5-phosphate + ADP. It participates in amino-acid biosynthesis; L-proline biosynthesis; L-glutamate 5-semialdehyde from L-glutamate: step 1/2. In terms of biological role, catalyzes the transfer of a phosphate group to glutamate to form L-glutamate 5-phosphate. The polypeptide is Glutamate 5-kinase (Polaromonas naphthalenivorans (strain CJ2)).